A 359-amino-acid polypeptide reads, in one-letter code: GDSL esterase/lipase At2g30310 (359 aa).

The N-terminal stretch at 1–28 is a signal peptide; sequence MSTSKTIVFGLFVATLLVSCNVAANATT. Serine 41 acts as the Nucleophile in catalysis. Residues asparagine 103 and asparagine 325 are each glycosylated (N-linked (GlcNAc...) asparagine). Active-site residues include aspartate 333 and histidine 336.

Belongs to the 'GDSL' lipolytic enzyme family.

It localises to the secreted. In Arabidopsis thaliana (Mouse-ear cress), this protein is GDSL esterase/lipase At2g30310.